Reading from the N-terminus, the 244-residue chain is tRNA (guanine-N(1)-)-methyltransferase (244 aa).

Residues Gly-120 and 140–145 contribute to the S-adenosyl-L-methionine site; that span reads IGDYIL.

It belongs to the RNA methyltransferase TrmD family. As to quaternary structure, homodimer.

It localises to the cytoplasm. It carries out the reaction guanosine(37) in tRNA + S-adenosyl-L-methionine = N(1)-methylguanosine(37) in tRNA + S-adenosyl-L-homocysteine + H(+). Specifically methylates guanosine-37 in various tRNAs. This is tRNA (guanine-N(1)-)-methyltransferase from Brucella canis (strain ATCC 23365 / NCTC 10854 / RM-666).